The following is a 446-amino-acid chain: Deoxyguanosinetriphosphate triphosphohydrolase-like protein (446 aa).

A disordered region spans residues 1 to 28 (MSSSVWQERRHGEDKQRRNDHRSPFQRD). Positions 7–28 (QERRHGEDKQRRNDHRSPFQRD) are enriched in basic and acidic residues. The HD domain occupies 59–252 (RLTHSLEVSQ…MELADDIAYA (194 aa)).

This sequence belongs to the dGTPase family. Type 2 subfamily.

The chain is Deoxyguanosinetriphosphate triphosphohydrolase-like protein from Shewanella sp. (strain ANA-3).